A 227-amino-acid polypeptide reads, in one-letter code: UPF0758 protein Pcryo_2119 (227 aa).

An MPN domain is found at 102–224; that stretch reads GLGRSQMVKD…TLSYAENSLP (123 aa). Zn(2+) is bound by residues histidine 173, histidine 175, and aspartate 186. The JAMM motif motif lies at 173-186; the sequence is HNHPHTDAKPSTAD.

It belongs to the UPF0758 family.

This chain is UPF0758 protein Pcryo_2119, found in Psychrobacter cryohalolentis (strain ATCC BAA-1226 / DSM 17306 / VKM B-2378 / K5).